The chain runs to 1300 residues: DNA-directed RNA polymerase subunit beta (1300 aa).

Belongs to the RNA polymerase beta chain family. The RNAP catalytic core consists of 2 alpha, 1 beta, 1 beta' and 1 omega subunit. When a sigma factor is associated with the core the holoenzyme is formed, which can initiate transcription.

The enzyme catalyses RNA(n) + a ribonucleoside 5'-triphosphate = RNA(n+1) + diphosphate. In terms of biological role, DNA-dependent RNA polymerase catalyzes the transcription of DNA into RNA using the four ribonucleoside triphosphates as substrates. The sequence is that of DNA-directed RNA polymerase subunit beta from Chlorobium chlorochromatii (strain CaD3).